Here is a 58-residue protein sequence, read N- to C-terminus: UPF0391 membrane protein Sbal_1421 (58 aa).

The next 2 helical transmembrane spans lie at 6–26 (LVFLVVAVIAGLLGFTGIAGA) and 28–48 (AGIAKIIFLIFIVLLVISLLV).

The protein belongs to the UPF0391 family.

The protein resides in the cell membrane. The polypeptide is UPF0391 membrane protein Sbal_1421 (Shewanella baltica (strain OS155 / ATCC BAA-1091)).